The primary structure comprises 496 residues: L-arabinose isomerase (496 aa).

Glutamate 302, glutamate 329, histidine 346, and histidine 445 together coordinate Mn(2+).

The protein belongs to the arabinose isomerase family. The cofactor is Mn(2+).

It catalyses the reaction beta-L-arabinopyranose = L-ribulose. The protein operates within carbohydrate degradation; L-arabinose degradation via L-ribulose; D-xylulose 5-phosphate from L-arabinose (bacterial route): step 1/3. Its function is as follows. Catalyzes the conversion of L-arabinose to L-ribulose. The polypeptide is L-arabinose isomerase (Thermotoga maritima (strain ATCC 43589 / DSM 3109 / JCM 10099 / NBRC 100826 / MSB8)).